The following is a 411-amino-acid chain: Lycopene beta cyclase (411 aa).

Residue 4-32 participates in NAD(+) binding; sequence ALVIGSGPAGLAIAAELAQRGLKVQGLSP.

Belongs to the lycopene cyclase family. FAD serves as cofactor.

It catalyses the reaction a carotenoid psi-end group = a carotenoid beta-end derivative. The catalysed reaction is all-trans-lycopene = gamma-carotene. It carries out the reaction gamma-carotene = all-trans-beta-carotene. The enzyme catalyses all-trans-neurosporene = beta-zeacarotene. It functions in the pathway carotenoid biosynthesis; beta-carotene biosynthesis. The protein operates within carotenoid biosynthesis; beta-zeacarotene biosynthesis. With respect to regulation, inhibited by the bleaching herbicide 2-(4-methylphenoxy)triethylamine hydrochloride (MPTA). Its function is as follows. Catalyzes the double cyclization reaction which converts lycopene to beta-carotene. It also converts neurosporene to the monocyclic beta-zeacarotene but does not cyclize zeta-carotene. The polypeptide is Lycopene beta cyclase (Synechococcus elongatus (strain ATCC 33912 / PCC 7942 / FACHB-805) (Anacystis nidulans R2)).